Here is a 189-residue protein sequence, read N- to C-terminus: Cell division protein SepF (189 aa).

Positions 152–163 are enriched in polar residues; sequence FQEEPSPSSVMN. Residues 152 to 189 are disordered; it reads FQEEPSPSSVMNKDNEGPVSESVMAPEPAWGASVPSAI.

Belongs to the SepF family. In terms of assembly, homodimer. Interacts with FtsZ.

The protein resides in the cytoplasm. Cell division protein that is part of the divisome complex and is recruited early to the Z-ring. Probably stimulates Z-ring formation, perhaps through the cross-linking of FtsZ protofilaments. Its function overlaps with FtsA. This chain is Cell division protein SepF, found in Prochlorococcus marinus (strain SARG / CCMP1375 / SS120).